A 238-amino-acid polypeptide reads, in one-letter code: Laccase-S (238 aa).

2 Plastocyanin-like domains span residues 4-87 (NVIA…YDPA) and 100-238 (HTII…IARY). N-linked (GlcNAc...) asparagine glycosylation is present at N8. Residues H21, H23, H66, and H68 each coordinate Cu cation. A disulfide bond links C74 and C162. N165 carries an N-linked (GlcNAc...) asparagine glycan.

Belongs to the multicopper oxidase family. Monomer. Cu cation serves as cofactor.

Its subcellular location is the secreted. It carries out the reaction 4 hydroquinone + O2 = 4 benzosemiquinone + 2 H2O. Its activity is regulated as follows. Activity is strongly promoted by toluene. Activity is promoted by magnesium, potassium, cadmium, zinc, nickel, sodium, lead and manganese ions. Completely inhibited by IAA (cysteine protease inhibitor), PMSF (serine protease inhibitor), DEP (histidine protease inhibitor) and NAI (tyrosine protease inhibitor). Inhibited by ethanol, acetone, SDS, and EDTA. Activity is strongly inhibited by mercury ions. Also inhibited by lithium, aluminum, calcium, barium and iron ions. In terms of biological role, lignin degradation and detoxification of lignin-derived products. Has activity towards 2,2'-azino-bis(3-ethylbenzothiazoline-6-sulfonic acid) (ABTS). The chain is Laccase-S from Trametes hirsuta (White-rot fungus).